Here is a 129-residue protein sequence, read N- to C-terminus: Glycine cleavage system H protein (129 aa).

The region spanning 24-106 (TYTVGITEHA…YAGGWIFKIK (83 aa)) is the Lipoyl-binding domain. N6-lipoyllysine is present on K65.

Belongs to the GcvH family. As to quaternary structure, the glycine cleavage system is composed of four proteins: P, T, L and H. (R)-lipoate serves as cofactor.

Functionally, the glycine cleavage system catalyzes the degradation of glycine. The H protein shuttles the methylamine group of glycine from the P protein to the T protein. The polypeptide is Glycine cleavage system H protein (Escherichia coli O7:K1 (strain IAI39 / ExPEC)).